The following is a 439-amino-acid chain: Adenylosuccinate synthetase (439 aa).

GTP is bound by residues 14–20 (GDEGKGK) and 42–44 (GHT). Asp-15 (proton acceptor) is an active-site residue. Mg(2+) contacts are provided by Asp-15 and Gly-42. IMP contacts are provided by residues 15-18 (DEGK), 40-43 (NAGH), Thr-130, Arg-144, Gln-225, Thr-240, and Arg-304. His-43 serves as the catalytic Proton donor. Substrate is bound at residue 300-306 (TTTGRRR). GTP contacts are provided by residues Arg-306, 332–334 (KLD), and 414–416 (SLG).

This sequence belongs to the adenylosuccinate synthetase family. Homodimer. Mg(2+) serves as cofactor.

The protein localises to the cytoplasm. The catalysed reaction is IMP + L-aspartate + GTP = N(6)-(1,2-dicarboxyethyl)-AMP + GDP + phosphate + 2 H(+). Its pathway is purine metabolism; AMP biosynthesis via de novo pathway; AMP from IMP: step 1/2. Its function is as follows. Plays an important role in the de novo pathway of purine nucleotide biosynthesis. Catalyzes the first committed step in the biosynthesis of AMP from IMP. This chain is Adenylosuccinate synthetase, found in Prochlorococcus marinus (strain MIT 9303).